A 150-amino-acid chain; its full sequence is Pyruvoyl-dependent arginine decarboxylase (150 aa).

The residue at position 42 (Ser-42) is a Pyruvic acid (Ser).

Belongs to the PdaD family. Pyruvate is required as a cofactor.

It carries out the reaction L-arginine + H(+) = agmatine + CO2. This is Pyruvoyl-dependent arginine decarboxylase from Methanopyrus kandleri (strain AV19 / DSM 6324 / JCM 9639 / NBRC 100938).